Reading from the N-terminus, the 652-residue chain is MPIQILPARLANQIAAGEVVERPASVVKELVENSIDAGATRIDIDIEKGGSKLIRIRDNGSGIPKEELTLALSRHATSKITTLDDLEAIVSLGFRGEALASISSVSRLTLTSRTVAQEEAWSAHAEGRDMEVKLKPAAHPVGTTIDVVDLFFNTPARRKFLRTDKTEFTHIDELLKRIALSRLDITINLRHNGKSVRQYRAAQTKMQVEKRLAAVCGASFLQHALEVELEHGDLIFHGWISSPEGARAQGDVQYCYVNGRMMKDKLINHAIRQGYESSLSTNQYAAYILFIEINPHDVDVNVHPAKHEVRFHQARLVHDFIYQAIYGALQQAASLPEVTTTSDIEMDRESYFPPMKDYVRQSSLPLTDAHIENKSKQLKEAIEATPSYPNKASSDEWVSKAKPSMPKAYQSEKPSQRELNNYQHLLTTRDREDKTSNFEVNEVRIPKISEAKHNTVVVPQLKSAVSTSMLLGKVLSVVDKVFGLLQLGNQLQLVDLRYAEFIKSYGQLNSAHHEVLKAQPLLIPLSIGIDKDICNKLTEYQGILKQLGIDLKVKNNESLIVMAVCQPIRQQNLQQLIPNLLRYIYQINPSLDQVISWLSHQVQHDEACYSSAQAIQLVMELEQLWGNELSQFNNKLLKNIDITQAIQAFSHE.

It belongs to the DNA mismatch repair MutL/HexB family.

Functionally, this protein is involved in the repair of mismatches in DNA. It is required for dam-dependent methyl-directed DNA mismatch repair. May act as a 'molecular matchmaker', a protein that promotes the formation of a stable complex between two or more DNA-binding proteins in an ATP-dependent manner without itself being part of a final effector complex. The sequence is that of DNA mismatch repair protein MutL from Aliivibrio salmonicida (strain LFI1238) (Vibrio salmonicida (strain LFI1238)).